Consider the following 456-residue polypeptide: MEGPEGLGRKQACLAMLLHFLDTYQGLLQEEEGAGHIIKDLYLLIMKDESLYQGLREDTLRLHQLVETVELKIPEENQPPSKQVKPLFRHFRRIDSCLQTRVAFRGSDEIFCRVYMPDHSYVTIRSRLSASVQDILGSVTEKLQYSEEPAGREDSLILVAVSSSGEKVLLQPTEDCVFTALGINSHLFACTRDSYEALVPLPEEIQVSPGDTEIHRVEPEDVANHLTAFHWELFRCVHELEFVDYVFHGERGRRETANLELLLQRCSEVTHWVATEVLLCEAPGKRAQLLKKFIKIAALCKQNQDLLSFYAVVMGLDNAAVSRLRLTWEKLPGKFKNLFRKFENLTDPCRNHKSYREVISKMKPPVIPFVPLILKDLTFLHEGSKTLVDGLVNIEKLHSVAEKVRTIRKYRSRPLYLDMEASPHHLQTKAYVRQFQVIDNQNLLFELSYKLEANSQ.

The Ras-GEF domain occupies 218–454; that stretch reads EPEDVANHLT…FELSYKLEAN (237 aa).

Functionally, probable guanine nucleotide exchange factor (GEF). The protein is Rap guanine nucleotide exchange factor-like 1 (RAPGEFL1) of Pongo pygmaeus (Bornean orangutan).